Consider the following 367-residue polypeptide: Inositol-3-phosphate synthase (367 aa).

Positions 78, 137, 157, 200, 235, and 248 each coordinate NAD(+).

Belongs to the myo-inositol 1-phosphate synthase family. It depends on NAD(+) as a cofactor.

The enzyme catalyses D-glucose 6-phosphate = 1D-myo-inositol 3-phosphate. Its function is as follows. Key enzyme in myo-inositol biosynthesis pathway that catalyzes the conversion of glucose 6-phosphate to 1D-myo-inositol 3-phosphate in a NAD-dependent manner. In Mycobacterium tuberculosis (strain CDC 1551 / Oshkosh), this protein is Inositol-3-phosphate synthase (ino1).